Here is a 795-residue protein sequence, read N- to C-terminus: Outer membrane protein assembly factor BamA (795 aa).

The signal sequence occupies residues 1–19; sequence MKKLLIASLLFGTTTTVFA. POTRA domains lie at 22 to 89, 90 to 170, 173 to 259, 262 to 341, and 344 to 418; these read FVAK…VVAK, SIIS…INED, AKLA…VNEG, YDLR…VDAG, and LTVR…VKER.

This sequence belongs to the BamA family. In terms of assembly, part of the Bam complex.

Its subcellular location is the cell outer membrane. Its function is as follows. Part of the outer membrane protein assembly complex, which is involved in assembly and insertion of beta-barrel proteins into the outer membrane. In Haemophilus influenzae (strain ATCC 51907 / DSM 11121 / KW20 / Rd), this protein is Outer membrane protein assembly factor BamA.